The primary structure comprises 1151 residues: UDP-N-acetylglucosamine--peptide N-acetylglucosaminyltransferase (1151 aa).

12 TPR repeats span residues 125–158, 193–226, 227–260, 261–294, 295–328, 329–362, 363–396, 397–430, 431–464, 465–498, 499–532, and 533–566; these read LKKVTELAHRQFQSGNYVEAEKYCNLVFQSDPNN, AEAYSNLGNYYKEKGQLQDALENYKLAVKLKPEF, IDAYINLAAALVSGGDLEQAVTAYFNALQINPDL, YCVRSDLGNLLKAMGRLEEAKVCYLKAIETQPQF, AVAWSNLGCVFNSQGEIWLAIHHFEKAVTLDPNF, LDAYINLGNVLKEARIFDRAVSAYLRALNLSGNH, AVVHGNLACVYYEQGLIDLAIDTYKKAIDLQPHF, PDAYCNLANALKEKGSVVEAEQMYMKALELCPTH, ADSQNNLANIKREQGKIEDATRLYLKALEIYPEF, AAAHSNLASILQQQGKLNDAILHYKEAIRIAPTF, ADAYSNMGNTLKEMGDSSAAIACYNRAIQINPAF, and ADAHSNLASIHKDAGNMAEAIQSYSTALKLKPDF. One copy of the TPR 13; truncated repeat lies at 567–577; the sequence is PDAYCNLAHCH. The short motif at 591 to 607 is the Nuclear localization signal element; sequence RKLVQIVEDQLCKKRLP. His612 serves as the catalytic Proton acceptor. UDP-binding positions include Gln954, Lys957, 1010 to 1013, 1016 to 1019, 1034 to 1036, and Asp1040; these read VAAK, HVRR, and GHT.

It belongs to the glycosyltransferase 41 family. O-GlcNAc transferase subfamily.

Its subcellular location is the nucleus. It localises to the cytoplasm. It is found in the perinuclear region. It catalyses the reaction L-seryl-[protein] + UDP-N-acetyl-alpha-D-glucosamine = 3-O-(N-acetyl-beta-D-glucosaminyl)-L-seryl-[protein] + UDP + H(+). The catalysed reaction is L-threonyl-[protein] + UDP-N-acetyl-alpha-D-glucosamine = 3-O-(N-acetyl-beta-D-glucosaminyl)-L-threonyl-[protein] + UDP + H(+). The protein operates within protein modification; protein glycosylation. Functionally, addition of nucleotide-activated sugars directly onto the polypeptide through O-glycosidic linkage with the hydroxyl of serine or threonine. Influences tap habituation in the mechanosensory neurons cell autonomously. The sequence is that of UDP-N-acetylglucosamine--peptide N-acetylglucosaminyltransferase (ogt-1) from Caenorhabditis elegans.